A 319-amino-acid chain; its full sequence is Putative GPI-anchor transamidase (319 aa).

Residues 1–16 form the signal peptide; sequence MRHVLLIFCAIIATEA. Active-site residues include histidine 156 and cysteine 198. N-linked (GlcNAc...) asparagine glycosylation occurs at asparagine 257.

The protein belongs to the peptidase C13 family.

It participates in glycolipid biosynthesis; glycosylphosphatidylinositol-anchor biosynthesis. Functionally, mediates GPI anchoring in the endoplasmic reticulum, by replacing a protein's C-terminal GPI attachment signal peptide with a pre-assembled GPI. During this transamidation reaction, the GPI transamidase forms a carbonyl intermediate with the substrate protein. The sequence is that of Putative GPI-anchor transamidase from Caenorhabditis elegans.